Here is a 195-residue protein sequence, read N- to C-terminus: Large ribosomal subunit protein uL18 (195 aa).

This sequence belongs to the universal ribosomal protein uL18 family. Part of the 50S ribosomal subunit. Contacts the 5S and 23S rRNAs.

Functionally, this is one of the proteins that bind and probably mediate the attachment of the 5S RNA into the large ribosomal subunit, where it forms part of the central protuberance. The chain is Large ribosomal subunit protein uL18 from Methanocaldococcus jannaschii (strain ATCC 43067 / DSM 2661 / JAL-1 / JCM 10045 / NBRC 100440) (Methanococcus jannaschii).